The primary structure comprises 552 residues: MELLAASRACIFFGLVTVLDAWGVQQVELSEGAWAMIDGRDVLTPTNTTTRVTKAWTFLETPPGCAGDISVKKVCVSHSLCEDNIIIGKHCNLLTGEHGIALAEFNVVNGSLRRTDDVYFVNGTVFPILAETRSVLQIHRATPSIAGVYTLHVSIDGMMKHSVVLLTVKKPPKQPQPQPRLRVKTPPPVTVPQVPVKTHTDFVVHGYHSRVYRDGESFELSVNLESHIVEPSFSAEIQWYYMNTSSSSCDLFRVFETCIFHPTAMACLHPEQHTCSFTSPIRATKILHRVYGNCSDHGNSWPSRCHSTLLGNRLYFIQPAQNRVDLLFKDTPASATGLYVFVLLYNGHPEAWTYTLLSTANHFMNVLTDVTRPRLGEHFYTDLGHKIITPHPSVATTEELGAWTRHYLAFLLVIICTCAALLVALVVWGCILYIRSNRKPYEVLNPFETVYTSVPSNDPSDEVLVFERLASDSDDSFDSDSDEELEYPPPPKPAPQLPPYQFVDGGDAPSGRSGFKVWFRDTPEASPVPLHKPTLQGPDYSRVASKLKSILK.

Residues 1-23 (MELLAASRACIFFGLVTVLDAWG) form the signal peptide. Residues 24–410 (VQQVELSEGA…GAWTRHYLAF (387 aa)) lie on the Virion surface side of the membrane. An N-linked (GlcNAc...) asparagine; by host glycan is attached at Asn-47. The interval 65–91 (CAGDISVKKVCVSHSLCEDNIIIGKHC) is interaction with gI. N-linked (GlcNAc...) asparagine; by host glycosylation is found at Asn-109, Asn-122, and Asn-243. Disulfide bonds link Cys-249–Cys-275 and Cys-258–Cys-267. A glycan (N-linked (GlcNAc...) asparagine; by host) is linked at Asn-293. Cys-294 and Cys-305 are oxidised to a cystine. Residues 411-427 (LLVIICTCAALLVALVV) form a helical membrane-spanning segment. At 428 to 552 (WGCILYIRSN…VASKLKSILK (125 aa)) the chain is on the intravirion side. The Internalization motif motif lies at 451–454 (YTSV). The tract at residues 470 to 478 (ASDSDDSFD) is acidic. Over residues 473–486 (SDDSFDSDSDEELE) the composition is skewed to acidic residues. The segment at 473-515 (SDDSFDSDSDEELEYPPPPKPAPQLPPYQFVDGGDAPSGRSGF) is disordered. The segment covering 487-498 (YPPPPKPAPQLP) has biased composition (pro residues).

The protein belongs to the alphaherpesvirinae glycoprotein E family. As to quaternary structure, interacts with gI. In terms of processing, phosphorylated on serines within the acidic cluster. Phosphorylation determines whether endocytosed viral gE traffics to the trans-Golgi network or recycles to the cell membrane.

The protein resides in the virion membrane. Its subcellular location is the host cell membrane. It is found in the host cell junction. The protein localises to the host Golgi apparatus membrane. It localises to the host endosome membrane. Functionally, in epithelial cells, the heterodimer gE/gI is required for the cell-to-cell spread of the virus, by sorting nascent virions to cell junctions. Once the virus reaches the cell junctions, virus particles can spread to adjacent cells extremely rapidly through interactions with cellular receptors that accumulate at these junctions. Implicated in basolateral spread in polarized cells. In neuronal cells, gE/gI is essential for the anterograde spread of the infection throughout the host nervous system. Together with US9, the heterodimer gE/gI is involved in the sorting and transport of viral structural components toward axon tips. The polypeptide is Envelope glycoprotein E (gE) (Equine herpesvirus 1 (strain Kentucky D) (EHV-1)).